The chain runs to 465 residues: Innexin-11 (465 aa).

The next 4 membrane-spanning stretches (helical) occupy residues 29 to 49 (LMTPNILLAFSVLISFKQFGG), 105 to 125 (QWVPFFLLLQAAFFRAPSYLW), 195 to 215 (SGFISWIYLFTKVLYFLNVFA), and 286 to 306 (IFVLLWFWYVILLLSSTVSLV). Positions 433-465 (ISTSLMPDKDDIESSSTSSEEDQKRVSNVITNI) are disordered.

This sequence belongs to the pannexin family.

The protein resides in the cell membrane. It localises to the cell junction. The protein localises to the gap junction. Its function is as follows. Structural component of the gap junctions. The protein is Innexin-11 (inx-11) of Caenorhabditis elegans.